We begin with the raw amino-acid sequence, 66 residues long: Beta-mammal toxin Co2 (66 aa).

In terms of domain architecture, LCN-type CS-alpha/beta spans 1-66 (KEGYIVNYHD…VWPLPKKRCN (66 aa)). 4 cysteine pairs are disulfide-bonded: Cys12-Cys65, Cys16-Cys41, Cys25-Cys46, and Cys29-Cys48.

As to expression, expressed by the venom gland.

The protein localises to the secreted. In terms of biological role, beta toxins bind voltage-independently at site-4 of sodium channels (Nav) and shift the voltage of activation toward more negative potentials thereby affecting sodium channel activation and promoting spontaneous and repetitive firing. This toxin acts on human Nav1.1/SCN1A, Nav1.2/SCN2A, Nav1.4/SCN4A and Nav1.6/SCN8A voltage-gated sodium channels. Also, it reduces the peak of sodium currents in Nav1.5/SCN5A at all potentials. In vivo, is lethal to mice when intraperitoneally injected at a dose of 5ug. No activity is observed when injected into crickets or woodlice. This Centruroides ornatus (Scorpion) protein is Beta-mammal toxin Co2.